A 154-amino-acid polypeptide reads, in one-letter code: Large ribosomal subunit protein uL13 (154 aa).

The tract at residues 131-154 (DHKHEAQQPEVVDFKSMNSKNTRG) is disordered.

This sequence belongs to the universal ribosomal protein uL13 family. In terms of assembly, part of the 50S ribosomal subunit.

In terms of biological role, this protein is one of the early assembly proteins of the 50S ribosomal subunit, although it is not seen to bind rRNA by itself. It is important during the early stages of 50S assembly. The protein is Large ribosomal subunit protein uL13 of Maricaulis maris (strain MCS10) (Caulobacter maris).